The sequence spans 515 residues: Nuclear hormone receptor family member nhr-62 (515 aa).

The nuclear receptor DNA-binding region spans 95-170; the sequence is NLVCVVCGDQ…AGMNPRAVQS (76 aa). 2 NR C4-type zinc fingers span residues 98-118 and 134-153; these read CVVC…CNGC and CRFE…CRAC. The disordered stretch occupies residues 169-195; the sequence is QSERVEREQNGSPNQIEEDDYKDLSSP. Residues 225 to 509 form the NR LBD domain; the sequence is EMAKLSEQIV…YLCHEVQFIQ (285 aa). The segment at 498-509 is AF-2; sequence SEYLCHEVQFIQ.

It belongs to the nuclear hormone receptor family. Widely expressed at a low level in many tissues including the pharynx, sensory neurons, intestine, spermatheca, hypodermis, and excretory cell.

The protein localises to the nucleus. Orphan nuclear hormone receptor. Required for metabolic and physiologic responses associated with dietary-restriction-induced longevity. Modulates triglyceride and lipid metabolism and autophagy, associated with dietary-restriction, probably acting via regulation of transcription of target genes. The polypeptide is Nuclear hormone receptor family member nhr-62 (nhr-62) (Caenorhabditis elegans).